A 188-amino-acid chain; its full sequence is Acireductone dioxygenase 1 (188 aa).

Fe(2+)-binding residues include H90, H92, E96, and H135. The Ni(2+) site is built by H90, H92, E96, and H135.

This sequence belongs to the acireductone dioxygenase (ARD) family. It depends on Fe(2+) as a cofactor. The cofactor is Ni(2+).

The protein localises to the cytoplasm. It localises to the nucleus. It catalyses the reaction 1,2-dihydroxy-5-(methylsulfanyl)pent-1-en-3-one + O2 = 4-methylsulfanyl-2-oxobutanoate + formate + 2 H(+). It carries out the reaction 1,2-dihydroxy-5-(methylsulfanyl)pent-1-en-3-one + O2 = 3-(methylsulfanyl)propanoate + CO + formate + 2 H(+). The protein operates within amino-acid biosynthesis; L-methionine biosynthesis via salvage pathway; L-methionine from S-methyl-5-thio-alpha-D-ribose 1-phosphate: step 5/6. Functionally, catalyzes 2 different reactions between oxygen and the acireductone 1,2-dihydroxy-3-keto-5-methylthiopentene (DHK-MTPene) depending upon the metal bound in the active site. Fe-containing acireductone dioxygenase (Fe-ARD) produces formate and 2-keto-4-methylthiobutyrate (KMTB), the alpha-ketoacid precursor of methionine in the methionine recycle pathway. Ni-containing acireductone dioxygenase (Ni-ARD) produces methylthiopropionate, carbon monoxide and formate, and does not lie on the methionine recycle pathway. This Vitis vinifera (Grape) protein is Acireductone dioxygenase 1.